Reading from the N-terminus, the 171-residue chain is KRAB domain-containing protein 4 (171 aa).

The KRAB domain occupies 8-79; sequence LTFKDVFVDF…DGGTPVRTCA (72 aa).

In terms of tissue distribution, expressed in brain, ovary, testis, prostate, tonsil, heart, bone marrow, colon, breast and kidney.

The chain is KRAB domain-containing protein 4 (KRBOX4) from Homo sapiens (Human).